We begin with the raw amino-acid sequence, 358 residues long: DNA polymerase IV (358 aa).

The 182-residue stretch at 4 to 185 (IIHIDMDCYF…LSLRKIPGVG (182 aa)) folds into the UmuC domain. Asp8 and Asp103 together coordinate Mg(2+). Glu104 is a catalytic residue.

This sequence belongs to the DNA polymerase type-Y family. In terms of assembly, monomer. Requires Mg(2+) as cofactor.

Its subcellular location is the cytoplasm. It carries out the reaction DNA(n) + a 2'-deoxyribonucleoside 5'-triphosphate = DNA(n+1) + diphosphate. Its function is as follows. Poorly processive, error-prone DNA polymerase involved in untargeted mutagenesis. Copies undamaged DNA at stalled replication forks, which arise in vivo from mismatched or misaligned primer ends. These misaligned primers can be extended by PolIV. Exhibits no 3'-5' exonuclease (proofreading) activity. May be involved in translesional synthesis, in conjunction with the beta clamp from PolIII. This is DNA polymerase IV from Shewanella baltica (strain OS185).